A 419-amino-acid polypeptide reads, in one-letter code: Fumarylacetoacetase (419 aa).

At Ser2 the chain carries N-acetylserine. Ser92 is modified (phosphoserine). Asp126 serves as a coordination point for Ca(2+). Tyr128 lines the substrate pocket. His133 (proton acceptor) is an active-site residue. A substrate-binding site is contributed by Arg142. Ca(2+) is bound by residues Glu199, Glu201, and Asp233. Asp233 contributes to the Mg(2+) binding site. Substrate is bound by residues Gln240 and Tyr244. Mg(2+) is bound by residues Lys253 and Thr257. Ser309 bears the Phosphoserine mark. Residue Thr350 coordinates substrate. Ser417 bears the Phosphoserine mark.

This sequence belongs to the FAH family. As to quaternary structure, homodimer. Requires Ca(2+) as cofactor. The cofactor is Mg(2+).

It carries out the reaction 4-fumarylacetoacetate + H2O = acetoacetate + fumarate + H(+). Its pathway is amino-acid degradation; L-phenylalanine degradation; acetoacetate and fumarate from L-phenylalanine: step 6/6. In Bos taurus (Bovine), this protein is Fumarylacetoacetase (FAH).